A 790-amino-acid chain; its full sequence is Kinesin-like protein KIF9 (790 aa).

Residues 6-340 enclose the Kinesin motor domain; it reads KVHAFVRVKP…LRFASRMKLV (335 aa). ATP-binding positions include 12 to 14 and 93 to 100; these read RVK and GQTGAGKT. The stretch at 342-380 forms a coiled coil; that stretch reads TEPAINEKYDAERMVKNLEKELALLKQELAIHDSLTNRT. Residues 477 to 578 are disordered; the sequence is QNFGLGVAPF…IRPDTPPSKP (102 aa). Residues 525-534 show a composition bias toward polar residues; sequence VSTSKTQLVP. T530 is modified (phosphothreonine). Composition is skewed to basic and acidic residues over residues 537–552 and 561–570; these read KDGDVKDMLSRDRETS and SPKEELRPIR. At S546 the chain carries Phosphoserine. Residues 658-690 adopt a coiled-coil conformation; sequence LLILKLKDLKKQYRSEYQDLRDLRAEIQYCQHL.

Belongs to the TRAFAC class myosin-kinesin ATPase superfamily. Kinesin family. In terms of assembly, interacts with HYDIN.

The protein resides in the cytoplasm. The protein localises to the cytoskeleton. It is found in the cell projection. Its subcellular location is the cilium. It localises to the flagellum. The protein resides in the flagellum axoneme. Functionally, essential for normal male fertility and for progressive motility of spermatozoa. This chain is Kinesin-like protein KIF9 (KIF9), found in Homo sapiens (Human).